We begin with the raw amino-acid sequence, 224 residues long: C-&gt;U-editing enzyme APOBEC-2 (224 aa).

The interval 1 to 23 (MAQKEEAAEAAAPASQNGDDLEN) is disordered. Zn(2+)-binding residues include E60 and H98. Residues 64–169 (GRNKTFLCYV…PEVQAALKKL (106 aa)) form the CMP/dCMP-type deaminase domain. E100 (proton donor) is an active-site residue. Residues C128 and C131 each coordinate Zn(2+).

Belongs to the cytidine and deoxycytidylate deaminase family. In terms of assembly, homotetramer. The cofactor is Zn(2+). As to expression, expressed exclusively in heart and skeletal muscle.

It catalyses the reaction cytidine(6666) in apoB mRNA + H2O + H(+) = uridine(6666) in apoB mRNA + NH4(+). In terms of biological role, probable C to U editing enzyme whose physiological substrate is not yet known. Does not display detectable apoB mRNA editing. Has a low intrinsic cytidine deaminase activity. May play a role in the epigenetic regulation of gene expression through the process of active DNA demethylation. This chain is C-&gt;U-editing enzyme APOBEC-2 (Apobec2), found in Mus musculus (Mouse).